Reading from the N-terminus, the 425-residue chain is Synaptotagmin-4 (425 aa).

Residues 1–16 (MAPITTSREEFDEIPT) are Vesicular-facing. The chain crosses the membrane as a helical span at residues 17 to 37 (VVGIFSAFGLVFTVSLFAWIC). The Cytoplasmic segment spans residues 38-425 (CQRKSSKSNK…IAKWHVLCDG (388 aa)). Residues 73–83 (FGADDKNEVKN) show a composition bias toward basic and acidic residues. Disordered regions lie at residues 73–93 (FGADDKNEVKNKPAVPKNSLH) and 127–147 (LEGEKESVSPESLKSSTSLTS). Serine 135 carries the phosphoserine; by MAPK8 modification. The segment covering 135 to 146 (SPESLKSSTSLT) has biased composition (low complexity). C2 domains follow at residues 153–274 (KLGT…MLMN) and 287–420 (GRGE…AKWH). Ca(2+) is bound by residues aspartate 246, serine 249, and aspartate 252.

Belongs to the synaptotagmin family. Interacts with KIF1A; the interaction increases in presence of calcium and decreases when SYT4 is phosphorylated at Ser-135. Ca(2+) is required as a cofactor. Phosphorylation at Ser-135 by MAPK8/JNK1 reduces interaction with KIF1A and neuronal dense core vesicles mobility. Expressed in melanocytes. Expressed in brain. Within brain, expression is highest in hippocampus, with substantial levels also detected in amygdala and thalamus.

It is found in the cytoplasmic vesicle. Its subcellular location is the secretory vesicle. The protein resides in the neuronal dense core vesicle membrane. In terms of biological role, synaptotagmin family member which does not bind Ca(2+). Involved in neuronal dense core vesicles (DCVs) mobility through its interaction with KIF1A. Upon increased neuronal activity, phosphorylation by MAPK8/JNK1 destabilizes the interaction with KIF1A and captures DCVs to synapses. Plays a role in dendrite formation by melanocytes. The sequence is that of Synaptotagmin-4 (SYT4) from Homo sapiens (Human).